We begin with the raw amino-acid sequence, 460 residues long: Argininosuccinate lyase (460 aa).

The protein belongs to the lyase 1 family. Argininosuccinate lyase subfamily.

The protein localises to the cytoplasm. The enzyme catalyses 2-(N(omega)-L-arginino)succinate = fumarate + L-arginine. The protein operates within amino-acid biosynthesis; L-arginine biosynthesis; L-arginine from L-ornithine and carbamoyl phosphate: step 3/3. In Nitratidesulfovibrio vulgaris (strain DSM 19637 / Miyazaki F) (Desulfovibrio vulgaris), this protein is Argininosuccinate lyase.